The following is a 132-amino-acid chain: NLP effector protein 15 (132 aa).

A Conserved undecapeptide motif I motif is present at residues 1–9 (MYSWYFPKD). The Hepta-peptide GHRHDWE motif II signature appears at 16 to 22 (GHRHDWE).

This sequence belongs to the Necrosis inducing protein (NPP1) family.

The protein resides in the secreted. Secreted effector that contributes moderately to virulence during infection by P.capsici. Causes only small yellow areas at 3 days after inoculation of host C.annuum leaves; these areas expand somewhat and became necrotic at 7 days after inoculation. Leads only to chlorotic areas, without necrosis at 7 days after non-host N.benthamiana leaves infection. The protein is NLP effector protein 15 of Phytophthora capsici.